The primary structure comprises 257 residues: Type III pantothenate kinase (257 aa).

6–13 contributes to the ATP binding site; the sequence is DSGNTNTV. 108–111 lines the substrate pocket; it reads GADR. Asp110 acts as the Proton acceptor in catalysis. Asp130 serves as a coordination point for K(+). Thr133 contacts ATP. Residue Thr185 coordinates substrate.

The protein belongs to the type III pantothenate kinase family. In terms of assembly, homodimer. It depends on NH4(+) as a cofactor. K(+) is required as a cofactor.

It localises to the cytoplasm. It carries out the reaction (R)-pantothenate + ATP = (R)-4'-phosphopantothenate + ADP + H(+). It functions in the pathway cofactor biosynthesis; coenzyme A biosynthesis; CoA from (R)-pantothenate: step 1/5. Catalyzes the phosphorylation of pantothenate (Pan), the first step in CoA biosynthesis. The protein is Type III pantothenate kinase of Rhodospirillum rubrum (strain ATCC 11170 / ATH 1.1.1 / DSM 467 / LMG 4362 / NCIMB 8255 / S1).